The chain runs to 202 residues: ATP synthase subunit b (202 aa).

The helical transmembrane segment at 9 to 29 (TTLSLCLAVCVVVIAVGTGWA) threads the bilayer.

The protein belongs to the ATPase B chain family. In terms of assembly, F-type ATPases have 2 components, F(1) - the catalytic core - and F(0) - the membrane proton channel. F(1) has five subunits: alpha(3), beta(3), gamma(1), delta(1), epsilon(1). F(0) has three main subunits: a(1), b(2) and c(10-14). The alpha and beta chains form an alternating ring which encloses part of the gamma chain. F(1) is attached to F(0) by a central stalk formed by the gamma and epsilon chains, while a peripheral stalk is formed by the delta and b chains.

It is found in the cell inner membrane. Its function is as follows. F(1)F(0) ATP synthase produces ATP from ADP in the presence of a proton or sodium gradient. F-type ATPases consist of two structural domains, F(1) containing the extramembraneous catalytic core and F(0) containing the membrane proton channel, linked together by a central stalk and a peripheral stalk. During catalysis, ATP synthesis in the catalytic domain of F(1) is coupled via a rotary mechanism of the central stalk subunits to proton translocation. Functionally, component of the F(0) channel, it forms part of the peripheral stalk, linking F(1) to F(0). The polypeptide is ATP synthase subunit b (Pelobacter propionicus (strain DSM 2379 / NBRC 103807 / OttBd1)).